Here is a 1898-residue protein sequence, read N- to C-terminus: Receptor-type tyrosine-protein phosphatase F (1898 aa).

The first 29 residues, 1–29 (MTPEPAPGRTMVPLVPALVMLGLVAGAHG), serve as a signal peptide directing secretion. At 30-1254 (DSKPVFVKVP…QQQEEPELLW (1225 aa)) the chain is on the extracellular side. Ig-like C2-type domains lie at 33–123 (PVFV…AKLS), 135–224 (PSID…ANLY), and 232–314 (PRFS…AQVT). The cysteines at positions 54 and 107 are disulfide-linked. Position 68 to 77 (68 to 77 (KKGKKVSSQR)) interacts with heparin. An N-linked (GlcNAc...) asparagine glycan is attached at Asn-117. The cysteines at positions 156 and 207 are disulfide-linked. N-linked (GlcNAc...) asparagine glycans are attached at residues Asn-250 and Asn-295. Residues Cys-253 and Cys-298 are joined by a disulfide bond. 8 consecutive Fibronectin type-III domains span residues 321–411 (PPID…TGEQ), 416–510 (PPRR…TQQG), 514–604 (QPAD…TAQS), 609–706 (PPQK…TDED), 711–810 (PPRK…TTGA), 811–905 (VPGR…PEDV), 909–1001 (FPQN…TMPV), and 1005–1089 (FAKN…TAPD). Residues 399-418 (PPSEAVRARTGEQAPSSPPR) are disordered. A disordered region spans residues 693–713 (GPESSPVLVRTDEDVPSGPPR). Asn-721 carries an N-linked (GlcNAc...) asparagine glycan. N-linked (GlcNAc...) asparagine glycans are attached at residues Asn-941 and Asn-957. A helical transmembrane segment spans residues 1255 to 1275 (VTGPVLAVILIVLIVIAILLF). Residues 1276-1898 (KRKRTHSPSS…YLGSFDHYAT (623 aa)) lie on the Cytoplasmic side of the membrane. Ser-1296 carries the phosphoserine modification. 2 Tyrosine-protein phosphatase domains span residues 1343 to 1598 (FSQE…LLEA) and 1630 to 1889 (MELE…ALEY). Substrate contacts are provided by residues Asp-1507, 1539–1545 (CSAGVGR), and Gln-1583. Cys-1539 acts as the Phosphocysteine intermediate in catalysis. The active-site Phosphocysteine intermediate is Cys-1830.

The protein belongs to the protein-tyrosine phosphatase family. Receptor class 2A subfamily. In terms of assembly, interacts with GRIP1. Interacts with PPFIA1, PPFIA2 and PPFIA3. Interacts with INSR.

It is found in the membrane. The catalysed reaction is O-phospho-L-tyrosyl-[protein] + H2O = L-tyrosyl-[protein] + phosphate. In terms of biological role, possible cell adhesion receptor. It possesses an intrinsic protein tyrosine phosphatase activity (PTPase) and dephosphorylates EPHA2 regulating its activity. The first PTPase domain has enzymatic activity, while the second one seems to affect the substrate specificity of the first one. The sequence is that of Receptor-type tyrosine-protein phosphatase F (PTPRF) from Bos taurus (Bovine).